Reading from the N-terminus, the 292-residue chain is Protoheme IX farnesyltransferase (292 aa).

9 helical membrane-spanning segments follow: residues 13-33, 35-55, 84-104, 106-126, 135-155, 161-181, 206-226, 231-251, and 263-283; these read ILFGNFITTLGGFFLAAQGSI, ILLLLLTLIGTTLVVASGCVV, VALVYAFVLGVMGFSILWFGV, GYAFLFAMIGFIVYVGFYSLW, TVIGSISGASPPVIGYTAVTH, ALLLFLAYALWQMPHSWAIAI, IECVIYILLFAAVLNGLYCFG, FFLITFNALTAYWFYLSIIGF, and FFLYSVILITLLSLSFSFTYQ.

This sequence belongs to the UbiA prenyltransferase family. Protoheme IX farnesyltransferase subfamily.

The protein localises to the cell inner membrane. It carries out the reaction heme b + (2E,6E)-farnesyl diphosphate + H2O = Fe(II)-heme o + diphosphate. Its pathway is porphyrin-containing compound metabolism; heme O biosynthesis; heme O from protoheme: step 1/1. In terms of biological role, converts heme B (protoheme IX) to heme O by substitution of the vinyl group on carbon 2 of heme B porphyrin ring with a hydroxyethyl farnesyl side group. This is Protoheme IX farnesyltransferase from Acinetobacter baumannii (strain AB307-0294).